We begin with the raw amino-acid sequence, 317 residues long: Acetyl-coenzyme A carboxylase carboxyl transferase subunit alpha (317 aa).

The region spanning R39 to E293 is the CoA carboxyltransferase C-terminal domain.

This sequence belongs to the AccA family. In terms of assembly, acetyl-CoA carboxylase is a heterohexamer composed of biotin carboxyl carrier protein (AccB), biotin carboxylase (AccC) and two subunits each of ACCase subunit alpha (AccA) and ACCase subunit beta (AccD).

The protein resides in the cytoplasm. The enzyme catalyses N(6)-carboxybiotinyl-L-lysyl-[protein] + acetyl-CoA = N(6)-biotinyl-L-lysyl-[protein] + malonyl-CoA. It participates in lipid metabolism; malonyl-CoA biosynthesis; malonyl-CoA from acetyl-CoA: step 1/1. Its function is as follows. Component of the acetyl coenzyme A carboxylase (ACC) complex. First, biotin carboxylase catalyzes the carboxylation of biotin on its carrier protein (BCCP) and then the CO(2) group is transferred by the carboxyltransferase to acetyl-CoA to form malonyl-CoA. This Neisseria gonorrhoeae (strain NCCP11945) protein is Acetyl-coenzyme A carboxylase carboxyl transferase subunit alpha.